Reading from the N-terminus, the 445-residue chain is Tubulin beta chain (445 aa).

GTP is bound by residues glutamine 11, glutamate 69, serine 138, glycine 142, threonine 143, glycine 144, asparagine 204, and asparagine 226. Glutamate 69 contributes to the Mg(2+) binding site. The interval 426–445 (QDATAEEEGEFEEEEGDVEA) is disordered. Residues 429–445 (TAEEEGEFEEEEGDVEA) show a composition bias toward acidic residues.

Belongs to the tubulin family. Dimer of alpha and beta chains. A typical microtubule is a hollow water-filled tube with an outer diameter of 25 nm and an inner diameter of 15 nM. Alpha-beta heterodimers associate head-to-tail to form protofilaments running lengthwise along the microtubule wall with the beta-tubulin subunit facing the microtubule plus end conferring a structural polarity. Microtubules usually have 13 protofilaments but different protofilament numbers can be found in some organisms and specialized cells. Interacts with DCX/apicortin; the interaction stabilizes microtubule assembly. Mg(2+) is required as a cofactor.

Its subcellular location is the cytoplasm. It localises to the cytoskeleton. In terms of biological role, tubulin is the major constituent of microtubules, a cylinder consisting of laterally associated linear protofilaments composed of alpha- and beta-tubulin heterodimers. Microtubules grow by the addition of GTP-tubulin dimers to the microtubule end, where a stabilizing cap forms. Below the cap, tubulin dimers are in GDP-bound state, owing to GTPase activity of alpha-tubulin. In Plasmodium falciparum (isolate 3D7), this protein is Tubulin beta chain.